The following is a 121-amino-acid chain: Putative viral protein-binding protein C1 (121 aa).

The segment at 21-57 (PWDRTRGHPDVPWRNLTSSPTRPLAQPAGSCMPAEPS) is disordered.

Interacts with core protein of hepatitis B virus.

The chain is Putative viral protein-binding protein C1 from Homo sapiens (Human).